We begin with the raw amino-acid sequence, 434 residues long: N-acylneuraminate cytidylyltransferase (434 aa).

An N-acetylmethionine modification is found at methionine 1. The tract at residues 1-42 (MDSVEKGAATSVSNPRGRPSRGRPPKLQRNSRGGQGRGVEKP) is disordered. Residues 15–31 (PRGRPSRGRPPKLQRNS) carry the BC1 motif motif. An omega-N-methylarginine mark is found at arginine 37 and arginine 52. Substrate contacts are provided by arginine 52, asparagine 62, arginine 111, serine 120, serine 122, and glutamine 143. A BC2 motif motif is present at residues 200 to 206 (KRPRRQD). The active site involves arginine 201. Residues 269–276 (KEKLKEIK) carry the BC3 motif motif.

This sequence belongs to the CMP-NeuNAc synthase family. In terms of assembly, homotetramer; the active enzyme is formed by a dimer of dimers.

It localises to the nucleus. The enzyme catalyses an N-acylneuraminate + CTP = a CMP-N-acyl-beta-neuraminate + diphosphate. Its pathway is amino-sugar metabolism; N-acetylneuraminate metabolism. Functionally, catalyzes the activation of N-acetylneuraminic acid (NeuNAc) to cytidine 5'-monophosphate N-acetylneuraminic acid (CMP-NeuNAc), a substrate required for the addition of sialic acid. Has some activity toward NeuNAc, N-glycolylneuraminic acid (Neu5Gc) or 2-keto-3-deoxy-D-glycero-D-galacto-nononic acid (KDN). This chain is N-acylneuraminate cytidylyltransferase (CMAS), found in Bos taurus (Bovine).